The following is a 1025-amino-acid chain: Multidrug resistance protein MdtC (1025 aa).

Transmembrane regions (helical) follow at residues 3-23 (FFALFIYRPVATILLSVAITL), 333-353 (EVEQTLIISVALVILVVFLFL), 360-380 (IIPAVSVPVSLIGTFAAMYLC), 387-407 (LSLMALTIATGFVVDDAIVVL), 431-451 (VGFTVLSMSLSLVAVFLPLLL), 463-483 (FAVTLSVAIGISLLVSLTLTP), 528-548 (LVGVVLLGTIALNIWLYISIP), 853-873 (VILIIAAIATVYIVLGILYES), 875-895 (VHPLTILSTLPSAGVGALLAL), 897-917 (LFNAPFSLIALIGIMLLIGIV), 953-973 (PIMMTTLAALFGALPLVLSGG), and 984-1004 (ITIVGGLVMSQLLTLYTTPVV).

It belongs to the resistance-nodulation-cell division (RND) (TC 2.A.6) family. MdtC subfamily. As to quaternary structure, part of a tripartite efflux system composed of MdtA, MdtB and MdtC. MdtC forms a heteromultimer with MdtB.

It is found in the cell inner membrane. In terms of biological role, the MdtABC tripartite complex confers resistance against novobiocin and deoxycholate. The chain is Multidrug resistance protein MdtC from Escherichia coli (strain K12 / MC4100 / BW2952).